We begin with the raw amino-acid sequence, 490 residues long: Aspartyl/glutamyl-tRNA(Asn/Gln) amidotransferase subunit B (490 aa).

The protein belongs to the GatB/GatE family. GatB subfamily. Heterotrimer of A, B and C subunits.

The enzyme catalyses L-glutamyl-tRNA(Gln) + L-glutamine + ATP + H2O = L-glutaminyl-tRNA(Gln) + L-glutamate + ADP + phosphate + H(+). The catalysed reaction is L-aspartyl-tRNA(Asn) + L-glutamine + ATP + H2O = L-asparaginyl-tRNA(Asn) + L-glutamate + ADP + phosphate + 2 H(+). Functionally, allows the formation of correctly charged Asn-tRNA(Asn) or Gln-tRNA(Gln) through the transamidation of misacylated Asp-tRNA(Asn) or Glu-tRNA(Gln) in organisms which lack either or both of asparaginyl-tRNA or glutaminyl-tRNA synthetases. The reaction takes place in the presence of glutamine and ATP through an activated phospho-Asp-tRNA(Asn) or phospho-Glu-tRNA(Gln). The protein is Aspartyl/glutamyl-tRNA(Asn/Gln) amidotransferase subunit B of Methylorubrum populi (strain ATCC BAA-705 / NCIMB 13946 / BJ001) (Methylobacterium populi).